The sequence spans 259 residues: Type III pantothenate kinase (259 aa).

6–13 is a binding site for ATP; that stretch reads DVGNTNCT. 107–110 provides a ligand contact to substrate; the sequence is GSDR. D109 functions as the Proton acceptor in the catalytic mechanism. D129 contacts K(+). T132 provides a ligand contact to ATP. T184 contributes to the substrate binding site.

Belongs to the type III pantothenate kinase family. In terms of assembly, homodimer. NH4(+) is required as a cofactor. It depends on K(+) as a cofactor.

The protein resides in the cytoplasm. It carries out the reaction (R)-pantothenate + ATP = (R)-4'-phosphopantothenate + ADP + H(+). It participates in cofactor biosynthesis; coenzyme A biosynthesis; CoA from (R)-pantothenate: step 1/5. Catalyzes the phosphorylation of pantothenate (Pan), the first step in CoA biosynthesis. This chain is Type III pantothenate kinase, found in Listeria monocytogenes serotype 4b (strain CLIP80459).